We begin with the raw amino-acid sequence, 327 residues long: Tetraacyldisaccharide 4'-kinase (327 aa).

Thr-52–Thr-59 contacts ATP.

Belongs to the LpxK family.

The catalysed reaction is a lipid A disaccharide + ATP = a lipid IVA + ADP + H(+). Its pathway is glycolipid biosynthesis; lipid IV(A) biosynthesis; lipid IV(A) from (3R)-3-hydroxytetradecanoyl-[acyl-carrier-protein] and UDP-N-acetyl-alpha-D-glucosamine: step 6/6. Its function is as follows. Transfers the gamma-phosphate of ATP to the 4'-position of a tetraacyldisaccharide 1-phosphate intermediate (termed DS-1-P) to form tetraacyldisaccharide 1,4'-bis-phosphate (lipid IVA). The protein is Tetraacyldisaccharide 4'-kinase of Gluconacetobacter diazotrophicus (strain ATCC 49037 / DSM 5601 / CCUG 37298 / CIP 103539 / LMG 7603 / PAl5).